A 189-amino-acid chain; its full sequence is dCTP deaminase (189 aa).

Residues 112–117 (KSTYAR), 136–138 (TLE), Q157, Y171, and Q181 each bind dCTP. Catalysis depends on E138, which acts as the Proton donor/acceptor.

Belongs to the dCTP deaminase family. As to quaternary structure, homotrimer.

It carries out the reaction dCTP + H2O + H(+) = dUTP + NH4(+). It participates in pyrimidine metabolism; dUMP biosynthesis; dUMP from dCTP (dUTP route): step 1/2. Functionally, catalyzes the deamination of dCTP to dUTP. The protein is dCTP deaminase of Albidiferax ferrireducens (strain ATCC BAA-621 / DSM 15236 / T118) (Rhodoferax ferrireducens).